Reading from the N-terminus, the 435-residue chain is Adenylosuccinate synthetase (435 aa).

GTP contacts are provided by residues 11–17 (GDEGKGK) and 39–41 (GHT). D12 serves as the catalytic Proton acceptor. Positions 12 and 39 each coordinate Mg(2+). IMP contacts are provided by residues 12–15 (DEGK), 37–40 (NAGH), T128, R142, Q223, T238, and R302. The active-site Proton donor is the H40. Residue 298-304 (SVTGRPR) coordinates substrate. GTP-binding positions include R304, 330–332 (KLD), and 412–414 (STG).

It belongs to the adenylosuccinate synthetase family. Homodimer. The cofactor is Mg(2+).

Its subcellular location is the cytoplasm. The enzyme catalyses IMP + L-aspartate + GTP = N(6)-(1,2-dicarboxyethyl)-AMP + GDP + phosphate + 2 H(+). It functions in the pathway purine metabolism; AMP biosynthesis via de novo pathway; AMP from IMP: step 1/2. In terms of biological role, plays an important role in the de novo pathway of purine nucleotide biosynthesis. Catalyzes the first committed step in the biosynthesis of AMP from IMP. The protein is Adenylosuccinate synthetase of Coxiella burnetii (strain Dugway 5J108-111).